The primary structure comprises 936 residues: Phosphoenolpyruvate carboxylase (936 aa).

The interval Met-1–Ala-20 is disordered. Active-site residues include His-164 and Lys-598.

The protein belongs to the PEPCase type 1 family. It depends on Mg(2+) as a cofactor.

It carries out the reaction oxaloacetate + phosphate = phosphoenolpyruvate + hydrogencarbonate. Its function is as follows. Forms oxaloacetate, a four-carbon dicarboxylic acid source for the tricarboxylic acid cycle. This is Phosphoenolpyruvate carboxylase (ppc) from Rhodopseudomonas palustris (strain ATCC BAA-98 / CGA009).